The primary structure comprises 551 residues: Alkaline nuclease (551 aa).

The protein belongs to the herpesviridae alkaline nuclease family. As to quaternary structure, interacts with major DNA-binding protein; this interaction increases the nuclease processivity of the alkaline exonuclease.

It is found in the host nucleus. The protein resides in the host cytoplasm. In terms of biological role, plays a role in processing non linear or branched viral DNA intermediates in order to promote the production of mature packaged unit-length linear progeny viral DNA molecules. Exhibits endonuclease and exonuclease activities and accepts both double-stranded and single-stranded DNA as substrate. Exonuclease digestion of DNA is in the 5'-&gt; 3' direction and the products are 5'-monophosphate nucleosides. Additionally, forms a recombinase with the major DNA-binding protein, which displays strand exchange activity. The chain is Alkaline nuclease from Varicella-zoster virus (strain Oka vaccine) (HHV-3).